A 198-amino-acid chain; its full sequence is Ribonuclease HII (198 aa).

The region spanning 6-198 (EQIAGVDEVG…APCQASLLPD (193 aa)) is the RNase H type-2 domain. Positions 12, 13, and 108 each coordinate a divalent metal cation.

The protein belongs to the RNase HII family. Requires Mn(2+) as cofactor. The cofactor is Mg(2+).

It is found in the cytoplasm. It catalyses the reaction Endonucleolytic cleavage to 5'-phosphomonoester.. Functionally, endonuclease that specifically degrades the RNA of RNA-DNA hybrids. The chain is Ribonuclease HII from Acaryochloris marina (strain MBIC 11017).